The sequence spans 265 residues: Thiazole synthase (265 aa).

Lys-106 (schiff-base intermediate with DXP) is an active-site residue. 1-deoxy-D-xylulose 5-phosphate contacts are provided by residues Gly-167, 193-194 (AG), and 215-216 (NS).

It belongs to the ThiG family. As to quaternary structure, homotetramer. Forms heterodimers with either ThiH or ThiS.

The protein localises to the cytoplasm. It catalyses the reaction [ThiS sulfur-carrier protein]-C-terminal-Gly-aminoethanethioate + 2-iminoacetate + 1-deoxy-D-xylulose 5-phosphate = [ThiS sulfur-carrier protein]-C-terminal Gly-Gly + 2-[(2R,5Z)-2-carboxy-4-methylthiazol-5(2H)-ylidene]ethyl phosphate + 2 H2O + H(+). Its pathway is cofactor biosynthesis; thiamine diphosphate biosynthesis. Its function is as follows. Catalyzes the rearrangement of 1-deoxy-D-xylulose 5-phosphate (DXP) to produce the thiazole phosphate moiety of thiamine. Sulfur is provided by the thiocarboxylate moiety of the carrier protein ThiS. In vitro, sulfur can be provided by H(2)S. This chain is Thiazole synthase, found in Prochlorococcus marinus (strain MIT 9515).